The following is a 122-amino-acid chain: Basic phospholipase A2 Ts-G6D49 (122 aa).

Disulfide bonds link Cys26–Cys115, Cys28–Cys44, Cys43–Cys95, Cys49–Cys122, Cys50–Cys88, Cys57–Cys81, and Cys75–Cys86. Tyr27, Gly29, and Gly31 together coordinate Ca(2+). His47 is an active-site residue. Asp48 contributes to the Ca(2+) binding site. Residue Asp89 is part of the active site.

It depends on Ca(2+) as a cofactor. In terms of tissue distribution, expressed by the venom gland.

The protein resides in the secreted. It carries out the reaction a 1,2-diacyl-sn-glycero-3-phosphocholine + H2O = a 1-acyl-sn-glycero-3-phosphocholine + a fatty acid + H(+). Functionally, snake venom phospholipase A2 that induces fast and sustaining local edema a few hours after injection (5-10 ug) in the hind paw, and prolongs the coagulation time of human plasma. Exhibits moderate hydrolytic activities and prefers the zwitterionic micelles (dPPC with Triton X-100) to the anionic micelles (dPPC with deoxycholate). PLA2 catalyzes the calcium-dependent hydrolysis of the 2-acyl groups in 3-sn-phosphoglycerides. This chain is Basic phospholipase A2 Ts-G6D49, found in Trimeresurus stejnegeri (Chinese green tree viper).